The chain runs to 281 residues: Probable endonuclease 4 (281 aa).

9 residues coordinate Zn(2+): His69, His109, Glu145, Asp179, His182, His216, Asp229, His231, and Glu261.

Belongs to the AP endonuclease 2 family. It depends on Zn(2+) as a cofactor.

The enzyme catalyses Endonucleolytic cleavage to 5'-phosphooligonucleotide end-products.. Endonuclease IV plays a role in DNA repair. It cleaves phosphodiester bonds at apurinic or apyrimidinic (AP) sites, generating a 3'-hydroxyl group and a 5'-terminal sugar phosphate. The protein is Probable endonuclease 4 of Glaesserella parasuis serovar 5 (strain SH0165) (Haemophilus parasuis).